The chain runs to 535 residues: MSSKVITSLMAESILLSKVGQVISGYSPITVFLLGSILIFLVVYNKRRSRLVKYIEKIPGPAAMPFLGNAIEMNVDHDELFNRVIGMQKLWGTRIGINRVWQGTAPRVLLFEPETVEPILNSQKFVNKSHDYDYLHPWLGEGLLTSTDRKWHSRRKILTPAFHFKILDDFIDVFNEQSAVLARKLAVEVGSEAFNLFPYVTLCTLDIVCETAMGRRIYAQSNSESEYVKAVYGIGSIVQSRQAKIWLQSDFIFSLTAEYKLHQSYINTLHGFSNMVIRERKAELAILQENNNNNNNNAPDAYDDVGKKKRLAFLDLLIDASKEGTVLSNEDIREEVDTFMFEGHDTTSAAISWTLFLLGCHPEYQERVVEELDSIFGDDKETPATMKNLMDMRYLECCIKDSLRLFPSVPMMARMVGEDVNIGGKIVPAGTQAIIMTYALHRNPRVFPKPEQFNPDNFLPENCAGRHPFAYIPFSAGPRNCIGQKFAILEEKAVISTVLRKYKIEAVDRREDLTLLGELILRPKDGLRVKITPRD.

Heme-binding residues include E342 and C481.

Belongs to the cytochrome P450 family. The cofactor is heme.

It is found in the endoplasmic reticulum membrane. It localises to the microsome membrane. Its function is as follows. May be involved in the metabolism of insect hormones and in the breakdown of synthetic insecticides. The protein is Cytochrome P450 4c3 (Cyp4c3) of Drosophila melanogaster (Fruit fly).